The chain runs to 235 residues: Large ribosomal subunit protein uL1 (235 aa).

The protein belongs to the universal ribosomal protein uL1 family. In terms of assembly, part of the 50S ribosomal subunit.

Its function is as follows. Binds directly to 23S rRNA. The L1 stalk is quite mobile in the ribosome, and is involved in E site tRNA release. Protein L1 is also a translational repressor protein, it controls the translation of the L11 operon by binding to its mRNA. The polypeptide is Large ribosomal subunit protein uL1 (Halothermothrix orenii (strain H 168 / OCM 544 / DSM 9562)).